Here is a 299-residue protein sequence, read N- to C-terminus: Prohibitin-2 (299 aa).

Residue Ala2 is modified to N-acetylalanine. The interval 19–49 (MGTALKLLLGAGAVAYGVRESVFTVEGGHRA) is necessary for transcriptional repression. Tyr128 is subject to Phosphotyrosine. At Lys147 the chain carries N6-acetyllysine. Residues 150–174 (ASQLITQRAQVSLLIRRELTERAKD) are necessary for transcriptional repression. Ser151 is modified (phosphoserine). Residues 190 to 238 (SREYTAAVEAKQVAQQEAQRAQFLVEKAKQEQRQKIVQAEGEAEAAKML) are a coiled coil. N6-acetyllysine occurs at positions 200, 236, 250, and 262.

Belongs to the prohibitin family. As to quaternary structure, the mitochondrial prohibitin complex consists of two subunits (PHB1 and PHB2), assembled into a membrane-associated ring-shaped supercomplex of approximately 1 mDa. Interacts with ESR1, HDAC1 and HDAC5. Interacts with ZNF703. Interacts with STOML2. Interacts with ARFGEF3. Interacts with SPHK2. Interacts with COX4I1; the interaction associates PHB2 with COX. Interacts with MAP1LC3B (membrane-bound form LC3-II); the interaction is direct and upon mitochondrial depolarization and proteasome-dependent outer membrane rupture. Interacts with IGFBP6 (via C-terminal domain). Interacts with CLPB. Interacts with CD86 (via cytoplasmic domain); the interactions increases after priming with CD40. Interacts with AFG3L2. Interacts with DNAJC19. Interacts with AKT2; this interaction may be important for myogenic differentiation. Post-translationally, phosphorylated. Tyrosine phosphorylation is indirectly stimulated by IGFBP6. As to expression, widely expressed in different tissues.

It is found in the mitochondrion inner membrane. The protein resides in the cytoplasm. The protein localises to the nucleus. It localises to the cell membrane. Functionally, protein with pleiotropic attributes mediated in a cell-compartment- and tissue-specific manner, which include the plasma membrane-associated cell signaling functions, mitochondrial chaperone, and transcriptional co-regulator of transcription factors and sex steroid hormones in the nucleus. Its function is as follows. In the mitochondria, together with PHB, forms large ring complexes (prohibitin complexes) in the inner mitochondrial membrane (IMM) and functions as a chaperone protein that stabilizes mitochondrial respiratory enzymes and maintains mitochondrial integrity in the IMM, which is required for mitochondrial morphogenesis, neuronal survival, and normal lifespan. The prohibitin complex, with DNAJC19, regulates cardiolipin remodeling and the protein turnover of OMA1 in a cardiolipin-binding manner. Also regulates cytochrome-c oxidase assembly (COX) and mitochondrial respiration. Binding to sphingoid 1-phosphate (SPP) modulates its regulator activity. Has a key role of mitophagy receptor involved in targeting mitochondria for autophagic degradation. Involved in mitochondrial-mediated antiviral innate immunity, activates RIG-I-mediated signal transduction and production of IFNB1 and pro-inflammatory cytokine IL6. In the nucleus, serves as transcriptional co-regulator. Acts as a mediator of transcriptional repression by nuclear hormone receptors via recruitment of histone deacetylases. Functions as an estrogen receptor (ER)-selective coregulator that potentiates the inhibitory activities of antiestrogens and represses the activity of estrogens. Competes with NCOA1 for modulation of ER transcriptional activity. In terms of biological role, in the plasma membrane, is involved in IGFBP6-induced cell migration. Cooperates with CD86 to mediate CD86-signaling in B lymphocytes that regulates the level of IgG1 produced through the activation of distal signaling intermediates. Upon CD40 engagement, required to activate NF-kappa-B signaling pathway via phospholipase C and protein kinase C activation. This is Prohibitin-2 from Mus musculus (Mouse).